The following is an 810-amino-acid chain: Eukaryotic translation initiation factor 3 subunit C (810 aa).

Residues 1-11 (MSRFFATNYNY) show a composition bias toward polar residues. Positions 1 to 98 (MSRFFATNYN…DSDESDEEDG (98 aa)) are disordered. Residues 12-33 (DETSSSSEEDLLSSSEELLSSS) show a composition bias toward low complexity. Acidic residues predominate over residues 34-58 (EEGELSDDSLFNDESESESDFDSDD). The PCI domain occupies 605-780 (YHQHINLDLV…TYIVIEKGDE (176 aa)).

The protein belongs to the eIF-3 subunit C family. As to quaternary structure, component of the eukaryotic translation initiation factor 3 (eIF-3) complex.

It is found in the cytoplasm. In terms of biological role, component of the eukaryotic translation initiation factor 3 (eIF-3) complex, which is involved in protein synthesis of a specialized repertoire of mRNAs and, together with other initiation factors, stimulates binding of mRNA and methionyl-tRNAi to the 40S ribosome. The eIF-3 complex specifically targets and initiates translation of a subset of mRNAs involved in cell proliferation. The sequence is that of Eukaryotic translation initiation factor 3 subunit C from Candida glabrata (strain ATCC 2001 / BCRC 20586 / JCM 3761 / NBRC 0622 / NRRL Y-65 / CBS 138) (Yeast).